The primary structure comprises 440 residues: Sialyltransferase-like protein 2 (440 aa).

Residues 1-5 are Cytoplasmic-facing; that stretch reads MKLLH. Residues 6 to 26 form a helical; Signal-anchor for type II membrane protein membrane-spanning segment; the sequence is LIFLLALTTGISAVLIYIIGV. At 27–440 the chain is on the lumenal side; it reads SNLYESNRFT…HGQLCITPAD (414 aa). Residues Asn113 and Asn149 are each glycosylated (N-linked (GlcNAc...) asparagine).

It belongs to the glycosyltransferase 29 family.

It is found in the golgi apparatus membrane. May be involved in the transfer of 2-keto-3-deoxy-D-lyxo-heptulosaric acid (Dha) and/or 2-keto-3-deoxy-D-manno-octulosonic acid (Kdo) on the homogalacturonan backbone of rhamnogalacturonan-II. Required for efficient pollen grain germination and pollen tube elongation. Does not possess sialyltransferase activity in vitro. This is Sialyltransferase-like protein 2 from Arabidopsis thaliana (Mouse-ear cress).